Here is a 191-residue protein sequence, read N- to C-terminus: Small ribosomal subunit protein uS7 (191 aa).

The protein belongs to the universal ribosomal protein uS7 family. Part of the 30S ribosomal subunit.

Functionally, one of the primary rRNA binding proteins, it binds directly to 16S rRNA where it nucleates assembly of the head domain of the 30S subunit. Is located at the subunit interface close to the decoding center. The polypeptide is Small ribosomal subunit protein uS7 (Methanocaldococcus jannaschii (strain ATCC 43067 / DSM 2661 / JAL-1 / JCM 10045 / NBRC 100440) (Methanococcus jannaschii)).